The chain runs to 146 residues: Antirestriction protein KlcA (146 aa).

The protein belongs to the antirestriction protein family.

In terms of biological role, could be involved in overcoming restriction barriers during establishment after conjugative transfer. The polypeptide is Antirestriction protein KlcA (klcA) (Escherichia coli).